Reading from the N-terminus, the 215-residue chain is Cytochrome b6 (215 aa).

Residues 32–52 (IFYCLGGITLTCFLIQFATGF) form a helical membrane-spanning segment. Residue Cys-35 coordinates heme c. Heme b is bound by residues His-86 and His-100. The next 3 membrane-spanning stretches (helical) occupy residues 90–110 (ASMM…TGGF), 116–136 (LTWV…VTGY), and 186–206 (AHTF…FLMI). Heme b is bound by residues His-187 and His-202.

Belongs to the cytochrome b family. PetB subfamily. As to quaternary structure, the 4 large subunits of the cytochrome b6-f complex are cytochrome b6, subunit IV (17 kDa polypeptide, PetD), cytochrome f and the Rieske protein, while the 4 small subunits are PetG, PetL, PetM and PetN. The complex functions as a dimer. Heme b serves as cofactor. Heme c is required as a cofactor.

Its subcellular location is the cellular thylakoid membrane. Functionally, component of the cytochrome b6-f complex, which mediates electron transfer between photosystem II (PSII) and photosystem I (PSI), cyclic electron flow around PSI, and state transitions. The polypeptide is Cytochrome b6 (Desmonostoc sp. (strain PCC 7906) (Nostoc sp. (strain PCC 7906))).